A 217-amino-acid polypeptide reads, in one-letter code: 2-phospho-L-lactate guanylyltransferase (217 aa).

This sequence belongs to the CofC family. As to quaternary structure, homodimer.

It carries out the reaction (2S)-2-phospholactate + GTP + H(+) = (2S)-lactyl-2-diphospho-5'-guanosine + diphosphate. It participates in cofactor biosynthesis; coenzyme F420 biosynthesis. Functionally, guanylyltransferase that catalyzes the activation of (2S)-2-phospholactate (2-PL) as (2S)-lactyl-2-diphospho-5'-guanosine, via the condensation of 2-PL with GTP. It is involved in the biosynthesis of coenzyme F420, a hydride carrier cofactor. This is 2-phospho-L-lactate guanylyltransferase from Methanospirillum hungatei JF-1 (strain ATCC 27890 / DSM 864 / NBRC 100397 / JF-1).